A 163-amino-acid polypeptide reads, in one-letter code: D-aminoacyl-tRNA deacylase (163 aa).

The short motif at 141–142 (GP) is the Gly-cisPro motif, important for rejection of L-amino acids element.

Belongs to the DTD family. In terms of assembly, homodimer.

The protein localises to the cytoplasm. It carries out the reaction glycyl-tRNA(Ala) + H2O = tRNA(Ala) + glycine + H(+). The catalysed reaction is a D-aminoacyl-tRNA + H2O = a tRNA + a D-alpha-amino acid + H(+). Its function is as follows. An aminoacyl-tRNA editing enzyme that deacylates mischarged D-aminoacyl-tRNAs. Also deacylates mischarged glycyl-tRNA(Ala), protecting cells against glycine mischarging by AlaRS. Acts via tRNA-based rather than protein-based catalysis; rejects L-amino acids rather than detecting D-amino acids in the active site. By recycling D-aminoacyl-tRNA to D-amino acids and free tRNA molecules, this enzyme counteracts the toxicity associated with the formation of D-aminoacyl-tRNA entities in vivo and helps enforce protein L-homochirality. In Neisseria meningitidis serogroup A / serotype 4A (strain DSM 15465 / Z2491), this protein is D-aminoacyl-tRNA deacylase.